The chain runs to 322 residues: uncharacterized protein (322 aa).

Basic residues-rich tracts occupy residues 1–16 and 43–61; these read MPGNSRRRGAVRKSGT and LRPHHPAAKRARAQPRRPV. Positions 1–69 are disordered; sequence MPGNSRRRGA…PVKRADETET (69 aa). Positions 261, 281, and 290 each coordinate S-adenosyl-L-methionine.

It belongs to the class IV-like SAM-binding methyltransferase superfamily. RNA methyltransferase TrmH family.

This is an uncharacterized protein from Mycobacterium bovis (strain ATCC BAA-935 / AF2122/97).